The following is a 110-amino-acid chain: Ribonuclease P protein component 4 (110 aa).

Residues cysteine 65, cysteine 68, cysteine 94, and cysteine 97 each contribute to the Zn(2+) site.

It belongs to the eukaryotic/archaeal RNase P protein component 4 family. In terms of assembly, consists of a catalytic RNA component and at least 5 protein subunits. It depends on Zn(2+) as a cofactor.

The protein resides in the cytoplasm. The catalysed reaction is Endonucleolytic cleavage of RNA, removing 5'-extranucleotides from tRNA precursor.. In terms of biological role, part of ribonuclease P, a protein complex that generates mature tRNA molecules by cleaving their 5'-ends. This Methanococcus maripaludis (strain DSM 14266 / JCM 13030 / NBRC 101832 / S2 / LL) protein is Ribonuclease P protein component 4.